The following is a 123-amino-acid chain: Urotensin-2 (123 aa).

Positions 1 to 20 (MDRVPFCCLLFVGLLNPLLS) are cleaved as a signal peptide. Residues 21-104 (FPVTDTGEMS…TVLSRLLART (84 aa)) constitute a propeptide that is removed on maturation. The interval 63–91 (EAEGSLGQADPSAETPTPRGSLRKALTGQ) is disordered. The cysteines at positions 117 and 122 are disulfide-linked.

This sequence belongs to the urotensin-2 family. Brain specific.

It is found in the secreted. Its function is as follows. Highly potent vasoconstrictor. This Rattus norvegicus (Rat) protein is Urotensin-2 (Uts2).